The sequence spans 350 residues: Nuclear pore complex-interacting protein family member A1 (350 aa).

Residues 306–325 are disordered; that stretch reads KTPPECLLTPLPPSAPPSVD.

Belongs to the NPIP family. May associate with the nuclear pore complex. In terms of tissue distribution, widely expressed.

Its subcellular location is the nucleus. The protein resides in the nuclear pore complex. The protein localises to the nucleus membrane. The polypeptide is Nuclear pore complex-interacting protein family member A1 (NPIPA1) (Homo sapiens (Human)).